A 432-amino-acid polypeptide reads, in one-letter code: Amino acid transporter ANT1 (432 aa).

Residues 1–30 are disordered; it reads MAIKDLTATTGDSSLPLIKSPPSETTGGDR. Over 1–35 the chain is Cytoplasmic; it reads MAIKDLTATTGDSSLPLIKSPPSETTGGDRTSALQ. Residues 36-56 form a helical membrane-spanning segment; sequence TLGNIIVSIVGTGVLGLPYAF. Residues 57-62 are Lumenal-facing; that stretch reads RIAGWL. Residues 63–83 traverse the membrane as a helical segment; the sequence is AGSLGVIIVGFATYYCMLLLI. Residues 84–115 are Cytoplasmic-facing; that stretch reads QCRDKLESEEGEEESKTYGDLGFKCMGTKGRY. The helical transmembrane segment at 116 to 136 threads the bilayer; the sequence is LTEFLIFTAQCGGSVAYLVFI. At 137–147 the chain is on the lumenal side; it reads GRNLSSIFSSY. Residues 148 to 168 form a helical membrane-spanning segment; sequence GLSMVSFILILVPIEVGLSWI. The Cytoplasmic segment spans residues 169-172; sequence TSLS. The chain crosses the membrane as a helical span at residues 173–193; it reads ALSPFSIFADICNIIAMCFVV. The Lumenal segment spans residues 194–219; it reads KENVEMVIEGDFSFSDRTAISSTIGG. Residues 220-240 form a helical membrane-spanning segment; sequence LPFAGGVAVFCFEGFAMTLAL. Over 241 to 256 the chain is Cytoplasmic; that stretch reads ESSMREREAFPKLLAK. A helical membrane pass occupies residues 257–277; the sequence is VLAGITFVYVLFGFCGYMAYG. The Lumenal portion of the chain corresponds to 278-292; it reads DQTKDIITLNLPNNW. The chain crosses the membrane as a helical span at residues 293-313; the sequence is SAIAVQIGLCVGLTFTFPIMV. The Cytoplasmic portion of the chain corresponds to 314–353; the sequence is HPLNEIIEQKLKRIDWLQKHHNGYSNETGSVSKFAIFTTR. The chain crosses the membrane as a helical span at residues 354-374; it reads TLLVVGLAAIASLVPGFGTFA. Over 375-379 the chain is Lumenal; the sequence is SLVGS. Residues 380-400 traverse the membrane as a helical segment; it reads TLCALISFVLPASYHLTLLGP. Residues 401–410 are Cytoplasmic-facing; the sequence is SLNVWNKSID. The chain crosses the membrane as a helical span at residues 411–431; that stretch reads VFIVICGLIFAVYGTYNTIVG. A topological domain (lumenal) is located at residue Val432.

Belongs to the amino acid/polyamine transporter 2 family. Amino acid/auxin permease (AAAP) (TC 2.A.18.8) subfamily. Ubiquitous. Highly expressed in flowers and cauline leaves and at lower levels in stems, leaves and roots.

It is found in the endoplasmic reticulum membrane. In terms of biological role, translocates aromatic and neutral amino acids such as tyrosine, tryptophan, phenylalanine, histidine, proline, leucine, valine, glutamine, as well as arginine. Transports the auxins indole-3-acetic acid (IAA) and 2,4-dichlorophenoxyacetic acid (2,4-D). The polypeptide is Amino acid transporter ANT1 (Arabidopsis thaliana (Mouse-ear cress)).